Here is a 310-residue protein sequence, read N- to C-terminus: tRNA-5-methyluridine(54) 2-sulfurtransferase (310 aa).

Zn(2+)-binding residues include Cys3, Cys6, Cys22, and His25. 2 residues coordinate ATP: Ala53 and Ile79. [4Fe-4S] cluster is bound by residues Cys128 and Cys131. A disulfide bridge connects residues Cys128 and Cys220. Positions 135 and 154 each coordinate ATP. Residue Cys220 participates in [4Fe-4S] cluster binding. Positions 272, 275, 284, and 287 each coordinate Zn(2+).

Belongs to the TtcA family. TtuA subfamily. Homodimer. It depends on [4Fe-4S] cluster as a cofactor. Mg(2+) is required as a cofactor.

The catalysed reaction is 5-methyluridine(54) in tRNA + hydrogen sulfide + ATP = 5-methyl-2-thiouridine(54) in tRNA + AMP + diphosphate. Its pathway is tRNA modification. Functionally, catalyzes the ATP-dependent 2-thiolation of 5-methyluridine residue at position 54 in the T loop of tRNAs, leading to 5-methyl-2-thiouridine (m(5)s(2)U or s(2)T). This modification allows thermal stabilization of tRNAs in thermophilic microorganisms, and is required for cell growth at high temperatures. Can use free sulfide as sulfur source in vitro, which may be also the sulfur source in vivo. This Pyrococcus horikoshii (strain ATCC 700860 / DSM 12428 / JCM 9974 / NBRC 100139 / OT-3) protein is tRNA-5-methyluridine(54) 2-sulfurtransferase.